Reading from the N-terminus, the 271-residue chain is Calretinin (271 aa).

EF-hand domains follow at residues 16 to 51, 63 to 98, 107 to 142, 151 to 186, 195 to 230, and 235 to 270; these read LTAS…LEKA, NFGE…EENF, GSSA…LLKK, KLQE…QENF, LTSE…LYEK, and MNIQ…SEPP. Ca(2+) is bound by residues D29, D31, N33, Y35, E40, D76, N78, D80, K82, E87, D120, D122, S124, Y126, E131, D164, N166, D168, K170, E175, D208, D210, S212, Y214, and E219. Y214 bears the Phosphotyrosine mark.

The protein belongs to the calbindin family. In terms of tissue distribution, brain.

It localises to the synapse. The protein localises to the cell projection. The protein resides in the dendrite. In terms of biological role, calcium-binding protein involved in calcium homeostasis and signal transduction. It plays a critical role in buffering intracellular calcium levels and modulating calcium-dependent signaling pathways. Predominantly expressed in specific neuronal populations, influences synaptic plasticity and neuronal excitability, contributing to learning and memory. During embryonic development, it facilitates neuronal differentiation and maturation. The sequence is that of Calretinin from Homo sapiens (Human).